Here is a 425-residue protein sequence, read N- to C-terminus: Enolase (425 aa).

Gln163 contacts (2R)-2-phosphoglycerate. The Proton donor role is filled by Glu205. Positions 242, 285, and 312 each coordinate Mg(2+). (2R)-2-phosphoglycerate-binding residues include Lys337, Arg366, Ser367, and Lys388. Lys337 (proton acceptor) is an active-site residue.

This sequence belongs to the enolase family. Mg(2+) is required as a cofactor.

The protein resides in the cytoplasm. It localises to the secreted. The protein localises to the cell surface. It carries out the reaction (2R)-2-phosphoglycerate = phosphoenolpyruvate + H2O. It functions in the pathway carbohydrate degradation; glycolysis; pyruvate from D-glyceraldehyde 3-phosphate: step 4/5. Functionally, catalyzes the reversible conversion of 2-phosphoglycerate (2-PG) into phosphoenolpyruvate (PEP). It is essential for the degradation of carbohydrates via glycolysis. This is Enolase from Cereibacter sphaeroides (strain ATCC 17029 / ATH 2.4.9) (Rhodobacter sphaeroides).